We begin with the raw amino-acid sequence, 218 residues long: N-(5'-phosphoribosyl)anthranilate isomerase (218 aa).

This sequence belongs to the TrpF family.

The enzyme catalyses N-(5-phospho-beta-D-ribosyl)anthranilate = 1-(2-carboxyphenylamino)-1-deoxy-D-ribulose 5-phosphate. The protein operates within amino-acid biosynthesis; L-tryptophan biosynthesis; L-tryptophan from chorismate: step 3/5. The protein is N-(5'-phosphoribosyl)anthranilate isomerase of Stenotrophomonas maltophilia (strain K279a).